Consider the following 3425-residue polypeptide: Genome polyprotein (3425 aa).

The tract at residues 3–16 (NKKPGRPGSGRVVN) is interaction with host EXOC1. Positions 38-73 (VLRGAGPIRFVLALLTFFKFTALRPTIGMLKRWKLV) are hydrophobic; homodimerization of capsid protein C. The propeptide at 105–120 (GGSCSWIIMLLPIVAG) is ER anchor for the capsid protein C, removed in mature form by serine protease NS3. A helical membrane pass occupies residues 105–125 (GGSCSWIIMLLPIVAGLKLGN). Residue asparagine 135 is glycosylated (N-linked (GlcNAc...) asparagine; by host). The next 2 membrane-spanning stretches (helical) occupy residues 247–267 (WALRNPGYALAAIFIGWNLGT) and 273–293 (IIFTIMLMLIAPAYSFSCLGM). 6 disulfides stabilise this stretch: cysteine 290–cysteine 317, cysteine 347–cysteine 403, cysteine 361–cysteine 392, cysteine 379–cysteine 408, cysteine 477–cysteine 575, and cysteine 592–cysteine 623. The interval 385 to 398 (DRGWGNGCGLFGKG) is fusion peptide. Transmembrane regions (helical) follow at residues 740–760 (LFGGMSWTTQGMLGALLLWMG) and 768–788 (ISMTFLAVGGILVFLAVNVNA). Cysteines 792 and 803 form a disulfide. Asparagine 918, asparagine 963, and asparagine 995 each carry an N-linked (GlcNAc...) asparagine; by host glycan. Cystine bridges form between cysteine 967-cysteine 1011, cysteine 1068-cysteine 1117, cysteine 1079-cysteine 1100, and cysteine 1101-cysteine 1104. 7 helical membrane-spanning segments follow: residues 1138–1158 (VMAFQGGGMEPMQLGMLVMIV), 1169–1189 (TAPIAWSALLLLMALVLFGGI), 1214–1234 (IVHLAMVAAFNIQPGLLIGFL), 1290–1310 (FALPLVSLLAPGLRIVGIDVV), 1337–1357 (MLLGVACATAGIASPLVFAGL), 1369–1389 (WPVSEALTAVGLTFALAGGIA), and 1395–1415 (SMAIPLAVGGIMLVVAVVTGF). Residues 1421 to 1460 (LEKASDISWSEEARVTGASQRFDVEIDQDGNMRLLNDPGV) are interacts with and activates NS3 protease. One can recognise a Peptidase S7 domain in the interval 1499–1676 (GGVIWDVPAP…EKKEEEVPQV (178 aa)). Catalysis depends on charge relay system; for serine protease NS3 activity residues histidine 1549, aspartate 1573, and serine 1633. The 157-residue stretch at 1679-1835 (ENMLRKRQLT…DSNSPITDIE (157 aa)) folds into the Helicase ATP-binding domain. An important for RNA-binding region spans residues 1683-1686 (RKRQ). Position 1692–1699 (1692–1699 (LHPGSGKT)) interacts with ATP. The DEAH box signature appears at 1783–1786 (DEAH). The 167-residue stretch at 1845–2011 (SGYEWITDFQ…GLVAQLYGPE (167 aa)) folds into the Helicase C-terminal domain. Residues 2162 to 2166 (EELPE) form a regulates the ATPase activity of NS3 helicase region. Transmembrane regions (helical) follow at residues 2169 to 2189 (ETFLLVFMMTVASMGVFLFFV), 2194 to 2214 (LGKTGLGAMVMATVTVLLWIA), 2216 to 2236 (VPAQKIAGVLLVSLLLMIVLI), 2252 to 2272 (VFMIVVLLVVGAVASNEMGWL), 2306 to 2326 (AWAAYAGATTFLTPLLKHLII), 2334 to 2354 (LMAMTAQAGALFGLGKGMPFV), 2371 to 2391 (FTMTTTVSAVMMVILHYAFLV), and 2441 to 2461 (CVLVGIALVAVFLTPNTLTLT). Residues 2521-2786 (GGGTGRTLGE…DVDLGSGTRA (266 aa)) form the mRNA cap 0-1 NS5-type MT domain. Serine 2576 serves as a coordination point for S-adenosyl-L-methionine. Serine 2576 bears the Phosphoserine mark. The For 2'-O-MTase activity role is filled by lysine 2581. Glycine 2606, tryptophan 2607, threonine 2624, lysine 2625, and valine 2652 together coordinate S-adenosyl-L-methionine. Catalysis depends on aspartate 2666, which acts as the For 2'-O-MTase activity. Isoleucine 2667 is a binding site for S-adenosyl-L-methionine. Active-site for 2'-O-MTase activity residues include lysine 2702 and glutamate 2738. Residue tyrosine 2740 participates in S-adenosyl-L-methionine binding. Glutamate 2960, histidine 2964, cysteine 2969, and cysteine 2972 together coordinate Zn(2+). The 153-residue stretch at 3050 to 3202 (GLMYADDTAG…KPADDRFATA (153 aa)) folds into the RdRp catalytic domain. 3 residues coordinate Zn(2+): histidine 3237, cysteine 3253, and cysteine 3372. A PDZ-binding motif is present at residues 3423–3425 (GVL).

This sequence in the N-terminal section; belongs to the class I-like SAM-binding methyltransferase superfamily. mRNA cap 0-1 NS5-type methyltransferase family. As to quaternary structure, homodimer. In terms of assembly, forms heterodimers with envelope protein E in the endoplasmic reticulum and Golgi. Homodimer; in the endoplasmic reticulum and Golgi. Interacts with protein prM. Interacts with non-structural protein 1. As to quaternary structure, homodimer; Homohexamer when secreted. Interacts with envelope protein E. NS1 interacts with NS4B. Interacts with host MAVS (via C-terminus); this interaction blocks the interaction of MAVS with RIGI or IFIH1/MDA5. In terms of assembly, interacts (via N-terminus) with serine protease NS3. Forms a heterodimer with serine protease NS3. May form homooligomers. As to quaternary structure, forms a heterodimer with NS2B. Interacts with non-structural protein 2A (via N-terminus). Interacts with NS4B. Interacts with unphosphorylated RNA-directed RNA polymerase NS5; this interaction stimulates RNA-directed RNA polymerase NS5 guanylyltransferase activity. In terms of assembly, interacts with serine protease NS3. Homodimer. Specific enzymatic cleavages in vivo yield mature proteins. Cleavages in the lumen of endoplasmic reticulum are performed by host signal peptidase, whereas cleavages in the cytoplasmic side are performed by serine protease NS3. Signal cleavage at the 2K-4B site requires a prior NS3 protease-mediated cleavage at the 4A-2K site. Both NS2A and NS2B proteins are required in cis for NS2A/2B proteolytic processing. In terms of processing, cleaved in post-Golgi vesicles by a host furin, releasing the mature small envelope protein M, and peptide pr. This cleavage is incomplete as up to 30% of viral particles still carry uncleaved prM. Post-translationally, N-glycosylated. N-glycosylated. The excreted form is glycosylated and this is required for efficient secretion of the protein from infected cells. In terms of processing, phosphorylated on serines residues. This phosphorylation may trigger NS5 nuclear localization.

It localises to the virion. The protein localises to the host nucleus. It is found in the host cytoplasm. The protein resides in the host perinuclear region. Its subcellular location is the secreted. It localises to the virion membrane. The protein localises to the host endoplasmic reticulum membrane. It catalyses the reaction Selective hydrolysis of -Xaa-Xaa-|-Yaa- bonds in which each of the Xaa can be either Arg or Lys and Yaa can be either Ser or Ala.. The catalysed reaction is RNA(n) + a ribonucleoside 5'-triphosphate = RNA(n+1) + diphosphate. It carries out the reaction a ribonucleoside 5'-triphosphate + H2O = a ribonucleoside 5'-diphosphate + phosphate + H(+). The enzyme catalyses ATP + H2O = ADP + phosphate + H(+). It catalyses the reaction a 5'-end (5'-triphosphoguanosine)-ribonucleoside in mRNA + S-adenosyl-L-methionine = a 5'-end (N(7)-methyl 5'-triphosphoguanosine)-ribonucleoside in mRNA + S-adenosyl-L-homocysteine. The catalysed reaction is a 5'-end (N(7)-methyl 5'-triphosphoguanosine)-ribonucleoside in mRNA + S-adenosyl-L-methionine = a 5'-end (N(7)-methyl 5'-triphosphoguanosine)-(2'-O-methyl-ribonucleoside) in mRNA + S-adenosyl-L-homocysteine + H(+). Functionally, capsid protein self-assembles to form an icosahedral capsid about 40 nm in diameter. Plays a role in virus budding by binding to the cell membrane and gathering the viral RNA into a nucleocapsid that forms the core of a mature virus particle. Prevents premature fusion activity of envelope proteins in trans-Golgi by binding to envelope protein E at pH6.0. After virion release in extracellular space, gets dissociated from E dimers. Its function is as follows. Acts as a chaperone for envelope protein E during intracellular virion assembly by masking and inactivating envelope protein E fusion peptide. prM is the only viral peptide matured by host furin in the trans-Golgi network probably to avoid catastrophic activation of the viral fusion activity in acidic Golgi compartment prior to virion release. prM-E cleavage is inefficient, and many virions are only partially matured. These uncleaved prM would play a role in immune evasion. In terms of biological role, may play a role in virus budding. Exerts cytotoxic effects by activating a mitochondrial apoptotic pathway through M ectodomain. May display a viroporin activity. Functionally, binds to host cell surface receptor and mediates fusion between viral and cellular membranes. Envelope protein is synthesized in the endoplasmic reticulum in the form of heterodimer with protein prM. They play a role in virion budding in the ER, and the newly formed immature particle is covered with 60 spikes composed of heterodimer between precursor prM and envelope protein E. The virion is transported to the Golgi apparatus where the low pH causes dissociation of PrM-E heterodimers and formation of E homodimers. Involved in immune evasion, pathogenesis and viral replication. Interacts with host MAVS and blocks MAVS binding to RIGI or IFIH1/MDA5, thereby leading to evasion of the innate immune response. Once cleaved off the polyprotein, is targeted to three destinations: the viral replication cycle, the plasma membrane and the extracellular compartment. Essential for viral replication. Required for formation of the replication complex and recruitment of other non-structural proteins to the ER-derived membrane structures. Excreted as a hexameric lipoparticle that plays a role against host immune response. Its function is as follows. Component of the viral RNA replication complex that functions in virion assembly. In terms of biological role, required cofactor for the serine protease function of NS3. May have membrane-destabilizing activity and form viroporins. Functionally, displays three enzymatic activities: serine protease, NTPase and RNA helicase. NS3 serine protease, in association with NS2B, performs its autocleavage and cleaves the polyprotein at dibasic sites in the cytoplasm: C-prM, NS2A-NS2B, NS2B-NS3, NS3-NS4A, NS4A-2K and NS4B-NS5. NS3 RNA helicase binds RNA and unwinds dsRNA in the 3' to 5' direction. Regulates the ATPase activity of the NS3 helicase activity. NS4A allows NS3 helicase to conserve energy during unwinding. Its function is as follows. Functions as a signal peptide for NS4B. In terms of biological role, induces the formation of ER-derived membrane vesicles where the viral replication takes place. Functionally, replicates the viral (+) and (-) RNA genome, and performs the capping of genomes in the cytoplasm. NS5 methylates viral RNA cap at guanine N-7 and ribose 2'-O positions. This is Genome polyprotein from Anas (ducks).